Consider the following 46-residue polypeptide: Diuretic hormone (46 aa).

Isoleucine amide is present on Ile-46.

Belongs to the sauvagine/corticotropin-releasing factor/urotensin I family.

It localises to the secreted. In terms of biological role, regulation of fluid secretion. Stimulates primary urine secretion by Malpighian tubules and causes a dose-dependent stimulation of cAMP levels in the tubules. The sequence is that of Diuretic hormone from Locusta migratoria (Migratory locust).